The chain runs to 984 residues: Putative formate dehydrogenase SAR2393 (984 aa).

Positions 3 to 79 constitute a 2Fe-2S ferredoxin-type domain; it reads EHLVVTLDGK…PMTVNTVNND (77 aa). 4 residues coordinate [2Fe-2S] cluster: cysteine 37, cysteine 48, cysteine 51, and cysteine 63. Positions 79–119 constitute a 4Fe-4S His(Cys)3-ligated-type domain; that stretch reads DVKDAQKEALDRILEKHMLYCTVCDYNNGDCEIHNTMDAWG. The [4Fe-4S] cluster site is built by histidine 95, cysteine 99, cysteine 102, cysteine 109, cysteine 147, cysteine 150, cysteine 153, cysteine 157, cysteine 190, cysteine 193, cysteine 196, cysteine 200, cysteine 264, cysteine 267, cysteine 271, and cysteine 299. 4Fe-4S ferredoxin-type domains follow at residues 138–165 and 181–211; these read PFYRYDPNQCILCGRCVEACQDIELNET and NDVPINESSCVSCGQCATVCPCNAMMEVNME. Residues 252-984 form a formate dehydrogenase region; it reads MRKERIKKTK…YVFPGNQVDK (733 aa). Positions 257 to 313 constitute a 4Fe-4S Mo/W bis-MGD-type domain; it reads IKKTKTVCTYCGVGCSFEVWTKDREILKVQPSHDSPANKIATCVKGKFSWGHINSDQ.

This sequence in the C-terminal section; belongs to the prokaryotic molybdopterin-containing oxidoreductase family. It depends on [2Fe-2S] cluster as a cofactor. [4Fe-4S] cluster is required as a cofactor. Requires Mo-bis(molybdopterin guanine dinucleotide) as cofactor.

It catalyses the reaction formate + NAD(+) = CO2 + NADH. The protein is Putative formate dehydrogenase SAR2393 of Staphylococcus aureus (strain MRSA252).